We begin with the raw amino-acid sequence, 175 residues long: UPF0398 protein SPH_0478 (175 aa).

It belongs to the UPF0398 family.

The chain is UPF0398 protein SPH_0478 from Streptococcus pneumoniae (strain Hungary19A-6).